Consider the following 612-residue polypeptide: Dihydroxy-acid dehydratase (612 aa).

Aspartate 81 is a binding site for Mg(2+). A [2Fe-2S] cluster-binding site is contributed by cysteine 122. Residues aspartate 123 and lysine 124 each contribute to the Mg(2+) site. Lysine 124 bears the N6-carboxylysine mark. A [2Fe-2S] cluster-binding site is contributed by cysteine 195. A Mg(2+)-binding site is contributed by glutamate 491. Catalysis depends on serine 517, which acts as the Proton acceptor.

Belongs to the IlvD/Edd family. As to quaternary structure, homodimer. It depends on [2Fe-2S] cluster as a cofactor. Mg(2+) serves as cofactor.

The catalysed reaction is (2R)-2,3-dihydroxy-3-methylbutanoate = 3-methyl-2-oxobutanoate + H2O. The enzyme catalyses (2R,3R)-2,3-dihydroxy-3-methylpentanoate = (S)-3-methyl-2-oxopentanoate + H2O. It functions in the pathway amino-acid biosynthesis; L-isoleucine biosynthesis; L-isoleucine from 2-oxobutanoate: step 3/4. The protein operates within amino-acid biosynthesis; L-valine biosynthesis; L-valine from pyruvate: step 3/4. Functions in the biosynthesis of branched-chain amino acids. Catalyzes the dehydration of (2R,3R)-2,3-dihydroxy-3-methylpentanoate (2,3-dihydroxy-3-methylvalerate) into 2-oxo-3-methylpentanoate (2-oxo-3-methylvalerate) and of (2R)-2,3-dihydroxy-3-methylbutanoate (2,3-dihydroxyisovalerate) into 2-oxo-3-methylbutanoate (2-oxoisovalerate), the penultimate precursor to L-isoleucine and L-valine, respectively. The sequence is that of Dihydroxy-acid dehydratase from Rhizobium rhizogenes (strain K84 / ATCC BAA-868) (Agrobacterium radiobacter).